The sequence spans 381 residues: Chymosin (381 aa).

A signal peptide spans 1-16 (MRCLVVLLAALALSQA). Positions 17-58 (SGITRIPLHKGKTLRKALKERGLLEDFLQRQQYAVSSKYSSL) are cleaved as a propeptide — activation peptide. The region spanning 74 to 378 (YFGKIYIGTP…DRANNRVGLA (305 aa)) is the Peptidase A1 domain. The active site involves Asp-92. Cys-105 and Cys-110 are oxidised to a cystine. N-linked (GlcNAc...) asparagine glycosylation occurs at Asn-158. Residues Cys-265 and Cys-269 are joined by a disulfide bond. Asp-274 is a catalytic residue. Cys-308 and Cys-341 are oxidised to a cystine. Asn-349 is a glycosylation site (N-linked (GlcNAc...) asparagine).

This sequence belongs to the peptidase A1 family.

It catalyses the reaction Broad specificity similar to that of pepsin A. Clots milk by cleavage of a single 104-Ser-Phe-|-Met-Ala-107 bond in kappa-chain of casein.. Chymosin is synthesized in the mucosa of the abomasum (fourth stomach) of young (unweaned) ruminants. The enzyme hydrolyzes casein to paracasein. This Camelus dromedarius (Dromedary) protein is Chymosin.